The primary structure comprises 235 residues: Futalosine hydrolase (235 aa).

This sequence belongs to the PNP/UDP phosphorylase family. Futalosine hydrolase subfamily.

The catalysed reaction is futalosine + H2O = dehypoxanthine futalosine + hypoxanthine. Its pathway is quinol/quinone metabolism; menaquinone biosynthesis. Functionally, catalyzes the hydrolysis of futalosine (FL) to dehypoxanthine futalosine (DHFL) and hypoxanthine, a step in the biosynthesis of menaquinone (MK, vitamin K2). Does not accept aminodeoxyfutalosine (AFL) as a substrate. The chain is Futalosine hydrolase from Streptomyces coelicolor (strain ATCC BAA-471 / A3(2) / M145).